Reading from the N-terminus, the 36-residue chain is Photosystem I reaction center subunit VIII (36 aa).

A helical transmembrane segment spans residues 10 to 29 (FVPLVGLVFPAIAMASLFLY).

The protein belongs to the PsaI family.

The protein resides in the plastid. It localises to the chloroplast thylakoid membrane. Its function is as follows. May help in the organization of the PsaL subunit. In Oryza nivara (Indian wild rice), this protein is Photosystem I reaction center subunit VIII.